We begin with the raw amino-acid sequence, 181 residues long: Ribulose bisphosphate carboxylase small subunit, chloroplastic 2 (181 aa).

The transit peptide at 1–57 (MAFLIMSSAAAVATGTNAAQASMIAPFTGLKSATSFPVSRKQNLDITSIASNGGRVQ) directs the protein to the chloroplast.

This sequence belongs to the RuBisCO small chain family. In terms of assembly, heterohexadecamer of 8 large and 8 small subunits.

Its subcellular location is the plastid. The protein resides in the chloroplast. Its function is as follows. RuBisCO catalyzes two reactions: the carboxylation of D-ribulose 1,5-bisphosphate, the primary event in carbon dioxide fixation, as well as the oxidative fragmentation of the pentose substrate. Both reactions occur simultaneously and in competition at the same active site. Although the small subunit is not catalytic it is essential for maximal activity. In Nicotiana sylvestris (Wood tobacco), this protein is Ribulose bisphosphate carboxylase small subunit, chloroplastic 2.